Here is a 443-residue protein sequence, read N- to C-terminus: ATP-dependent protease ATPase subunit HslU (443 aa).

Residues I18 and 60 to 65 (GVGKTE) contribute to the ATP site. A disordered region spans residues 137-156 (PPPRDAWGQNEQSEDTSNTR). A compositionally biased stretch (polar residues) spans 145–156 (QNEQSEDTSNTR). Residues D256, E321, and R393 each coordinate ATP.

This sequence belongs to the ClpX chaperone family. HslU subfamily. In terms of assembly, a double ring-shaped homohexamer of HslV is capped on each side by a ring-shaped HslU homohexamer. The assembly of the HslU/HslV complex is dependent on binding of ATP.

Its subcellular location is the cytoplasm. In terms of biological role, ATPase subunit of a proteasome-like degradation complex; this subunit has chaperone activity. The binding of ATP and its subsequent hydrolysis by HslU are essential for unfolding of protein substrates subsequently hydrolyzed by HslV. HslU recognizes the N-terminal part of its protein substrates and unfolds these before they are guided to HslV for hydrolysis. The protein is ATP-dependent protease ATPase subunit HslU of Vibrio vulnificus (strain YJ016).